Here is a 524-residue protein sequence, read N- to C-terminus: M-phase inducer phosphatase 1 (524 aa).

Positions 74 to 84 match the Phosphodegron motif; it reads MGSSESTDSGF. S76 carries the phosphoserine; by CHEK1 modification. Phosphoserine; by NEK11 occurs at positions 79, 82, and 88. Phosphoserine is present on S107. Residue S124 is modified to Phosphoserine; by CHEK1 and CHEK2. The short motif at 141–143 is the KEN box element; that stretch reads KEN. The residue at position 178 (S178) is a Phosphoserine; by CHEK1. The disordered stretch occupies residues 264–317; that stretch reads LCSSSTRSVLKRPERSQEESPPGSTKRRKSMSGASPKESTNPEKAHETLHQSLS. Phosphoserine; by CHEK1 and CHEK2 occurs at positions 279 and 293. Over residues 303–312 the composition is skewed to basic and acidic residues; sequence TNPEKAHETL. Phosphoserine is present on S321. The 107-residue stretch at 376–482 folds into the Rhodanese domain; sequence LIKEFVIIDC…FFMKCQSYCE (107 aa). C431 is an active-site residue. At T507 the chain carries Phosphothreonine; by CHEK1. 2 positions are modified to phosphoserine; by PLK3: S513 and S519.

This sequence belongs to the MPI phosphatase family. Interacts with CCNB1/cyclin B1. Interacts with YWHAE/14-3-3 epsilon when phosphorylated. Interacts with CUL1 specifically when CUL1 is neddylated and active. Interacts with BTRC/BTRCP1 and FBXW11/BTRCP2. Interactions with CUL1, BTRC and FBXW11 are enhanced upon DNA damage. Interacts with CHEK2; mediates CDC25A phosphorylation and degradation in response to infrared-induced DNA damages. Interacts with HSP90AB1; prevents heat shock-mediated CDC25A degradation and contributes to cell cycle progression. Phosphorylated by CHEK1 on Ser-76, Ser-124, Ser-178, Ser-279, Ser-293 and Thr-507 during checkpoint mediated cell cycle arrest. Also phosphorylated by CHEK2 on Ser-124, Ser-279, and Ser-293 during checkpoint mediated cell cycle arrest. Phosphorylation on Ser-178 and Thr-507 creates binding sites for YWHAE/14-3-3 epsilon which inhibits CDC25A. Phosphorylation on Ser-76, Ser-124, Ser-178, Ser-279 and Ser-293 may also promote ubiquitin-dependent proteolysis of CDC25A by the SCF complex. Phosphorylation of CDC25A at Ser-76 by CHEK1 primes it for subsequent phosphorylation at Ser-79, Ser-82 and Ser-88 by NEK11. Phosphorylation by NEK11 is required for BTRC-mediated polyubiquitination and degradation. Phosphorylation by PIM1 leads to an increase in phosphatase activity. Phosphorylated by PLK3 following DNA damage, leading to promote its ubiquitination and degradation. In terms of processing, ubiquitinated by the anaphase promoting complex/cyclosome (APC/C) ubiquitin ligase complex that contains FZR1/CDH1 during G1 phase leading to its degradation by the proteasome. Ubiquitinated by a SCF complex containing BTRC and FBXW11 during S phase leading to its degradation by the proteasome. Deubiquitination by USP17L2/DUB3 leads to its stabilization.

The catalysed reaction is O-phospho-L-tyrosyl-[protein] + H2O = L-tyrosyl-[protein] + phosphate. With respect to regulation, stimulated by B-type cyclins. Stimulated by PIM1-mediated phosphorylation. Tyrosine protein phosphatase which functions as a dosage-dependent inducer of mitotic progression. Directly dephosphorylates CDK1 and stimulates its kinase activity. Also dephosphorylates CDK2 in complex with cyclin-E, in vitro. The chain is M-phase inducer phosphatase 1 (CDC25A) from Homo sapiens (Human).